Here is a 488-residue protein sequence, read N- to C-terminus: NADH-quinone oxidoreductase subunit N (488 aa).

14 helical membrane passes run 15–35, 42–62, 79–99, 108–128, 133–153, 168–188, 209–229, 243–263, 277–297, 305–325, 333–353, 376–396, 409–429, and 456–476; these read LALP…VDLY, GMTF…AIVA, NLAA…FAYC, LLKG…MIMA, LMTV…MVAF, FVLG…IYGA, WLLL…FGAV, PTTV…ALFV, WQPM…LAAL, MLAY…IAGT, LFYA…IILL, MALM…TVGF, VGLV…AFYY, and GLLV…DSLI.

It belongs to the complex I subunit 2 family. NDH-1 is composed of 14 different subunits. Subunits NuoA, H, J, K, L, M, N constitute the membrane sector of the complex.

The protein resides in the cell inner membrane. It catalyses the reaction a quinone + NADH + 5 H(+)(in) = a quinol + NAD(+) + 4 H(+)(out). In terms of biological role, NDH-1 shuttles electrons from NADH, via FMN and iron-sulfur (Fe-S) centers, to quinones in the respiratory chain. The immediate electron acceptor for the enzyme in this species is believed to be ubiquinone. Couples the redox reaction to proton translocation (for every two electrons transferred, four hydrogen ions are translocated across the cytoplasmic membrane), and thus conserves the redox energy in a proton gradient. This Alkalilimnicola ehrlichii (strain ATCC BAA-1101 / DSM 17681 / MLHE-1) protein is NADH-quinone oxidoreductase subunit N.